The following is a 600-amino-acid chain: Estrogen receptor (600 aa).

Residues 1-189 are modulating (transactivation AF-1); mediates interaction with MACROD1; that stretch reads MTMTLHTKAS…IMESAKETRY (189 aa). O-linked (GlcNAc) serine glycosylation is present at serine 10. The interval 35–47 is required for interaction with NCOA1; the sequence is MERALGEVYVDNS. The interaction with DDX5; self-association stretch occupies residues 35-179; it reads MERALGEVYV…LSSSSEKGNM (145 aa). 2 positions are modified to phosphoserine; by CDK2: serine 109 and serine 111. Serine 123 is subject to Phosphoserine. Residues 148 to 177 are disordered; that stretch reads DTGPPAFYRSNSDNRRQNGRERLSSSSEKG. The span at 159 to 170 shows a compositional bias: basic and acidic residues; sequence SDNRRQNGRERL. Phosphoserine; by CK2 is present on serine 172. 2 NR C4-type zinc fingers span residues 190–210 and 226–250; these read CAVC…CEGC and CPAT…LRKC. The segment at residues 190 to 255 is a DNA-binding region (nuclear receptor); sequence CAVCNDYASG…RLRKCYEVGM (66 aa). A mediates interaction with DNTTIP2 region spans residues 190 to 315; sequence CAVCNDYASG…TKKNSPALSL (126 aa). The segment at 256–315 is hinge; that stretch reads MKGGIRKDRRGGRMLKHKRQRDDLEGRNEMGTSGDMRAANLWPSPLVIKHTKKNSPALSL. The residue at position 265 (arginine 265) is an Asymmetric dimethylarginine; by PRMT1. The segment at 267-600 is interaction with AKAP13; it reads GRMLKHKRQR…PEAEGFPNTI (334 aa). The segment at 269–600 is self-association; that stretch reads MLKHKRQRDD…PEAEGFPNTI (332 aa). Residues 316–552 enclose the NR LBD domain; the sequence is TADQMVSALL…DLLLEMLDAH (237 aa). A transactivation AF-2 region spans residues 316–600; that stretch reads TADQMVSALL…PEAEGFPNTI (285 aa). 17beta-estradiol-binding residues include glutamate 358 and arginine 399. A lipid anchor (S-palmitoyl cysteine) is attached at cysteine 452. Histidine 529 lines the 17beta-estradiol pocket. Tyrosine 542 bears the Phosphotyrosine; by Tyr-kinases mark. Positions 558–581 are disordered; it reads ASRMGVPPEEPSQSQLTTTSSTSA. Residues 569 to 581 show a composition bias toward low complexity; that stretch reads SQSQLTTTSSTSA. Residue threonine 576 is glycosylated (O-linked (GlcNAc) threonine).

The protein belongs to the nuclear hormone receptor family. NR3 subfamily. Interacts with BCAS3. Binds DNA as a homodimer. Can form a heterodimer with ESR2. Interacts with coactivator NCOA5. Interacts with PELP1, the interaction is enhanced by 17-beta-estradiol; the interaction increases ESR1 transcriptional activity. Interacts with NCOA7; the interaction is ligand-inducible. Interacts with AKAP13, CUEDC2, HEXIM1, KDM5A, MAP1S, SMARD1, and UBE1C. Interacts with MUC1; the interaction is stimulated by 7 beta-estradiol (E2) and enhances ESR1-mediated transcription. Interacts with DNTTIP2, and UIMC1. Interacts with KMT2D/MLL2. Interacts with ATAD2; the interaction is enhanced by estradiol. Interacts with KIF18A and LDB1. Interacts with RLIM (via its C-terminus). Interacts with MACROD1. Interacts with SH2D4A and PLCG. Interacts with SH2D4A; the interaction blocks binding to PLCG and inhibits estrogen-induced cell proliferation. Interacts with DYNLL1. Interacts with CCDC62; the interaction requires estradiol and appears to enhance the transcription of target genes. Interacts with NR2C1; the interaction prevents homodimerization of ESR1 and suppresses its transcriptional activity and cell growth. Interacts with DNAAF4. Interacts with PRMT2. Interacts with RBFOX2. Interacts with EP300; the interaction is estrogen-dependent and enhanced by CITED1. Interacts with CITED1; the interaction is estrogen-dependent. Interacts with FAM120B, FOXL2, PHB2 and SLC30A9. Interacts with coactivators NCOA3 and NCOA6. Interacts with STK3/MST2 only in the presence of SAV1 and vice-versa. Binds to CSNK1D. Interacts with NCOA2; NCOA2 can interact with ESR1 AF-1 and AF-2 domains simultaneously and mediate their transcriptional synergy. Interacts with DDX5. Interacts with NCOA1; the interaction seems to require a self-association of N-terminal and C-terminal regions. Interacts with ZNF366, DDX17, NFKB1, RELA, SP1 and SP3. Interacts with NRIP1. Interacts with GPER1; the interaction occurs in an estrogen-dependent manner. Interacts with TRIP4 (ufmylated); estrogen dependent. Interacts with LMTK3; the interaction phosphorylates ESR1 (in vitro) and protects it against proteasomal degradation. Interacts with CCAR2 (via N-terminus) in a ligand-independent manner. Interacts with ZFHX3. Interacts with SFR1 in a ligand-dependent and -independent manner. Interacts with DCAF13, LATS1 and DCAF1; regulates ESR1 ubiquitination and ubiquitin-mediated proteasomal degradation. Interacts (via DNA-binding domain) with POU4F2 (C-terminus); this interaction increases the estrogen receptor ESR1 transcriptional activity in a DNA- and ligand 17-beta-estradiol-independent manner. Interacts with ESRRB isoform 1. Interacts with UBE3A and WBP2. Interacts with GTF2B. Interacts with RBM39. In the absence of hormonal ligand, interacts with TACC1. Interacts with PI3KR1 or PI3KR2 and PTK2/FAK1. Interacts with SRC. Interacts with BAG1; the interaction is promoted in the absence of estradiol (17-beta-estradiol/E2). Interacts with and ubiquitinated by STUB1; the interaction is promoted in the absence of estradiol (17-beta-estradiol/E2). Interacts with NEDD8. In terms of processing, phosphorylated by cyclin A/CDK2 and CK1. Phosphorylation probably enhances transcriptional activity. Dephosphorylation at Ser-123 by PPP5C inhibits its transactivation activity. Phosphorylated by LMTK3 (in vitro). Ubiquitinated; regulated by LATS1 via DCAF1 it leads to ESR1 proteasomal degradation. Deubiquitinated by OTUB1. Ubiquitinated by STUB1/CHIP; in the CA1 hippocampal region following loss of endogenous circulating estradiol (17-beta-estradiol/E2). Ubiquitinated by UBR5, leading to its degradation: UBR5 specifically recognizes and binds ligand-bound ESR1 when it is not associated with coactivators (NCOAs). In presence of NCOAs, the UBR5-degron is not accessible, preventing its ubiquitination and degradation. Post-translationally, palmitoylated at Cys-452 by ZDHHC7 and ZDHHC21. This modification is required for plasma membrane targeting and for rapid intracellular signaling via ERK and AKT kinases and cAMP generation, but not for signaling mediated by the nuclear hormone receptor. In terms of processing, dimethylated by PRMT1 at Arg-265. The methylation may favor cytoplasmic localization. Demethylated by JMJD6 at Arg-265. As to expression, expressed in the CA1 region of the hippocampus, expression decreases with age (at protein level). Expressed in the uterus (at protein level).

Its subcellular location is the nucleus. It localises to the cytoplasm. The protein resides in the golgi apparatus. The protein localises to the cell membrane. Its function is as follows. Nuclear hormone receptor. The steroid hormones and their receptors are involved in the regulation of eukaryotic gene expression and affect cellular proliferation and differentiation in target tissues. Ligand-dependent nuclear transactivation involves either direct homodimer binding to a palindromic estrogen response element (ERE) sequence or association with other DNA-binding transcription factors, such as AP-1/c-Jun, c-Fos, ATF-2, Sp1 and Sp3, to mediate ERE-independent signaling. Ligand binding induces a conformational change allowing subsequent or combinatorial association with multiprotein coactivator complexes through LXXLL motifs of their respective components. Mutual transrepression occurs between the estrogen receptor (ER) and NF-kappa-B in a cell-type specific manner. Decreases NF-kappa-B DNA-binding activity and inhibits NF-kappa-B-mediated transcription from the IL6 promoter and displace RELA/p65 and associated coregulators from the promoter. Recruited to the NF-kappa-B response element of the CCL2 and IL8 promoters and can displace CREBBP. Present with NF-kappa-B components RELA/p65 and NFKB1/p50 on ERE sequences. Can also act synergistically with NF-kappa-B to activate transcription involving respective recruitment adjacent response elements; the function involves CREBBP. Can activate the transcriptional activity of TFF1. Also mediates membrane-initiated estrogen signaling involving various kinase cascades. Essential for MTA1-mediated transcriptional regulation of BRCA1 and BCAS3. Maintains neuronal survival in response to ischemic reperfusion injury when in the presence of circulating estradiol (17-beta-estradiol/E2). The sequence is that of Estrogen receptor (Esr1) from Rattus norvegicus (Rat).